Consider the following 70-residue polypeptide: Conotoxin Cl6.13 (70 aa).

A signal peptide spans 1 to 21 (MKFPLLFISLALAAFLTRVQD). The propeptide occupies 22-33 (ADSSVISKEKSV). Intrachain disulfides connect Cys41–Cys58, Cys48–Cys63, and Cys57–Cys68.

As to expression, expressed by the venom duct.

The protein localises to the secreted. This is Conotoxin Cl6.13 from Californiconus californicus (California cone).